A 119-amino-acid polypeptide reads, in one-letter code: Large ribosomal subunit protein uL22 (119 aa).

The protein belongs to the universal ribosomal protein uL22 family. Part of the 50S ribosomal subunit.

Its function is as follows. This protein binds specifically to 23S rRNA; its binding is stimulated by other ribosomal proteins, e.g. L4, L17, and L20. It is important during the early stages of 50S assembly. It makes multiple contacts with different domains of the 23S rRNA in the assembled 50S subunit and ribosome. In terms of biological role, the globular domain of the protein is located near the polypeptide exit tunnel on the outside of the subunit, while an extended beta-hairpin is found that lines the wall of the exit tunnel in the center of the 70S ribosome. The protein is Large ribosomal subunit protein uL22 of Rickettsia prowazekii (strain Madrid E).